The sequence spans 190 residues: Putative histone H1.6 (190 aa).

A disordered region spans residues 1–29 (MSDVAVAETPAVKTPTKAPKANATKVPKV). Ser2 is subject to N-acetylserine. Low complexity predominate over residues 9–29 (TPAVKTPTKAPKANATKVPKV). The 77-residue stretch at 34–110 (AHPPFINMVT…GATGRFRVAE (77 aa)) folds into the H15 domain. The segment at 141–190 (KKTGDKVKKAKSPKKIAKPAAKKATKSPSKKVAPKKAAAKPAKKTAALKA) is disordered. A compositionally biased stretch (basic residues) spans 148–183 (KKAKSPKKIAKPAAKKATKSPSKKVAPKKAAAKPAK).

The protein belongs to the histone H1/H5 family.

The protein localises to the nucleus. It localises to the chromosome. Its function is as follows. Histones H1 are necessary for the condensation of nucleosome chains into higher-order structures. The chain is Putative histone H1.6 (hil-6) from Caenorhabditis elegans.